An 851-amino-acid polypeptide reads, in one-letter code: Venom phosphodiesterase (851 aa).

The signal sequence occupies residues 1–23; that stretch reads MIQQKVLFISLVAVALGLGLGLG. 2 consecutive SMB domains span residues 30 to 73 and 74 to 118; these read PQVS…VLPT and QSWS…GETS. 16 disulfide bridges follow: C34-C38, C34-C51, C38-C69, C49-C51, C49-C62, C55-C61, C62-C69, C78-C83, C78-C95, C83-C113, C93-C95, C93-C106, C99-C105, C106-C113, C124-C170, and C132-C344. N39 carries an N-linked (GlcNAc...) asparagine glycan. The Cell attachment site signature appears at 58–60; it reads RQA. A divalent metal cation is bound by residues D147 and T185. Catalysis depends on T185, which acts as the AMP-threonine intermediate. N-linked (GlcNAc...) asparagine glycans are attached at residues N216, N259, and N270. Position 271 (K271) interacts with AMP. A divalent metal cation is bound by residues D305, H309, D352, and H353. H309 is a binding site for AMP. Cystine bridges form between C360-C457, C408-C793, C541-C599, C554-C654, C556-C639, and C762-C772. N405 is a glycosylation site (N-linked (GlcNAc...) asparagine). H462 contacts a divalent metal cation. N-linked (GlcNAc...) asparagine glycosylation is found at N512, N594, and N745.

Belongs to the nucleotide pyrophosphatase/phosphodiesterase family. As to quaternary structure, monomer cleaved in two subunits; disulfide-linked. Is synthesized as a single-chain protein and is subsequently cleaved to form a two-subunit protein held together with disulfide bonds. Requires a divalent metal cation as cofactor. In terms of tissue distribution, expressed by venom gland.

The protein resides in the secreted. The catalysed reaction is ADP + H2O = AMP + phosphate + H(+). Functionally, hydrolyzes ADP with high activity. Shows weak or no activity on 5'-AMP, 5'-GMP, 3'-AMP, ATP, cAMP, and cGMP. Is devoid of monophosphatase and proteinase activities. Dose-dependently inhibits platelet aggregation induced by ADP (IC(50)=0.99 uM) and collagen (IC(50)=1.4 uM). This is Venom phosphodiesterase from Macrovipera lebetinus (Levantine viper).